Reading from the N-terminus, the 88-residue chain is Phosphocarrier protein HPr (88 aa).

The region spanning 1–88 (MEQQSYTIID…DVLSKEGLTE (88 aa)) is the HPr domain. The active-site Pros-phosphohistidine intermediate is H15. S46 carries the post-translational modification Phosphoserine; by HPrK/P.

The protein belongs to the HPr family.

The protein resides in the cytoplasm. Its activity is regulated as follows. Phosphorylation on Ser-46 inhibits the phosphoryl transfer from enzyme I to HPr. Its function is as follows. General (non sugar-specific) component of the phosphoenolpyruvate-dependent sugar phosphotransferase system (sugar PTS). This major carbohydrate active-transport system catalyzes the phosphorylation of incoming sugar substrates concomitantly with their translocation across the cell membrane. The phosphoryl group from phosphoenolpyruvate (PEP) is transferred to the phosphoryl carrier protein HPr by enzyme I. Phospho-HPr then transfers it to the PTS EIIA domain. Functionally, P-Ser-HPr interacts with the catabolite control protein A (CcpA), forming a complex that binds to DNA at the catabolite response elements cre, operator sites preceding a large number of catabolite-regulated genes. Thus, P-Ser-HPr is a corepressor in carbon catabolite repression (CCR), a mechanism that allows bacteria to coordinate and optimize the utilization of available carbon sources. P-Ser-HPr also plays a role in inducer exclusion, in which it probably interacts with several non-PTS permeases and inhibits their transport activity. The protein is Phosphocarrier protein HPr (ptsH) of Staphylococcus carnosus.